The chain runs to 216 residues: LexA repressor (216 aa).

A DNA-binding region (H-T-H motif) is located at residues 29 to 49; that stretch reads RAEIAQALGFRSPNAAEDHLK. Active-site for autocatalytic cleavage activity residues include Ser-134 and Lys-171.

The protein belongs to the peptidase S24 family. Homodimer.

The enzyme catalyses Hydrolysis of Ala-|-Gly bond in repressor LexA.. In terms of biological role, represses a number of genes involved in the response to DNA damage (SOS response), including recA and lexA. In the presence of single-stranded DNA, RecA interacts with LexA causing an autocatalytic cleavage which disrupts the DNA-binding part of LexA, leading to derepression of the SOS regulon and eventually DNA repair. This is LexA repressor from Bordetella bronchiseptica (strain ATCC BAA-588 / NCTC 13252 / RB50) (Alcaligenes bronchisepticus).